Here is a 776-residue protein sequence, read N- to C-terminus: Reticulon-1 (776 aa).

Disordered regions lie at residues 1–103 (MAAP…GEGS), 136–168 (ISESPEELGTPGSSLPDVPGIESRGLFSSDSGI), 204–244 (EVKH…EPAP), and 285–580 (LTEI…APPP). A compositionally biased stretch (basic and acidic residues) spans 204–240 (EVKHQEQNHPELEDKDLDFKNKDTDISIKPEGVREPD). A Phosphoserine modification is found at S327. Over residues 328–341 (PGSITPPSSGTEPS) the composition is skewed to low complexity. S350, S352, and S487 each carry phosphoserine. A compositionally biased stretch (basic and acidic residues) spans 497–511 (AIREETGVRAEERAP). One can recognise a Reticulon domain in the interval 589 to 776 (AIDLLYWRDI…KIPGAKRHAE (188 aa)). Transmembrane regions (helical) follow at residues 603-623 (IVFGSFLLLLFSLTQFSVVSV) and 705-725 (FAVLMWLLTYVGALFNGLTLL).

Interacts with NDRG1. Interacts with BACE1. Interacts with TMEM33. Post-translationally, phosphorylated.

It is found in the endoplasmic reticulum membrane. It localises to the golgi apparatus membrane. Inhibits amyloid precursor protein processing, probably by blocking BACE1 activity. The protein is Reticulon-1 (RTN1) of Pan troglodytes (Chimpanzee).